The chain runs to 127 residues: Protein ApaG (127 aa).

Residues 3 to 127 form the ApaG domain; sequence NDQKYDIKVQ…FILSVPRVLH (125 aa).

The sequence is that of Protein ApaG from Nitrosomonas eutropha (strain DSM 101675 / C91 / Nm57).